Here is a 201-residue protein sequence, read N- to C-terminus: Large ribosomal subunit protein uL4 (201 aa).

The tract at residues 39–72 (RRGTASTKTRAQVSKSGKKMYSQKGTGNARHGDR) is disordered. The segment covering 42–53 (TASTKTRAQVSK) has biased composition (polar residues).

This sequence belongs to the universal ribosomal protein uL4 family. As to quaternary structure, part of the 50S ribosomal subunit.

One of the primary rRNA binding proteins, this protein initially binds near the 5'-end of the 23S rRNA. It is important during the early stages of 50S assembly. It makes multiple contacts with different domains of the 23S rRNA in the assembled 50S subunit and ribosome. Its function is as follows. Forms part of the polypeptide exit tunnel. The protein is Large ribosomal subunit protein uL4 of Deinococcus deserti (strain DSM 17065 / CIP 109153 / LMG 22923 / VCD115).